Consider the following 274-residue polypeptide: MPELPEVETIRRTLLPLIVGKTIEDVRIFWPNIIRHPRDPEAFAARMIGQTVRGLERRGKFLKFLLDRDALISHLRMEGRYAVASALEPLEPHTHVVFCFTDGSELRYRDVRKFGTMHVYAKEEADRRPPLAELGPEPLSPAFSPAVLAERAVKTKRSVKALLLDQTVVAGFGNIYVDESLFRAGILPGRPAASLSSKEIERLHEEMVATIGEAVMKGGSTVRTYVNTQGEAGAFQHSLFVYGRKGEPCKRCGTPIEKTVVAGRGTHYCPRCQR.

Catalysis depends on Pro2, which acts as the Schiff-base intermediate with DNA. Glu3 functions as the Proton donor in the catalytic mechanism. The active-site Proton donor; for beta-elimination activity is the Lys60. The DNA site is built by His93 and Arg112. The FPG-type zinc-finger motif lies at 240–274; sequence FVYGRKGEPCKRCGTPIEKTVVAGRGTHYCPRCQR. Arg264 acts as the Proton donor; for delta-elimination activity in catalysis.

Belongs to the FPG family. As to quaternary structure, monomer. Requires Zn(2+) as cofactor.

The catalysed reaction is Hydrolysis of DNA containing ring-opened 7-methylguanine residues, releasing 2,6-diamino-4-hydroxy-5-(N-methyl)formamidopyrimidine.. It carries out the reaction 2'-deoxyribonucleotide-(2'-deoxyribose 5'-phosphate)-2'-deoxyribonucleotide-DNA = a 3'-end 2'-deoxyribonucleotide-(2,3-dehydro-2,3-deoxyribose 5'-phosphate)-DNA + a 5'-end 5'-phospho-2'-deoxyribonucleoside-DNA + H(+). Its function is as follows. Involved in base excision repair of DNA damaged by oxidation or by mutagenic agents. Acts as a DNA glycosylase that recognizes and removes damaged bases. Has a preference for oxidized purines, such as 7,8-dihydro-8-oxoguanine (8-oxoG). Has AP (apurinic/apyrimidinic) lyase activity and introduces nicks in the DNA strand. Cleaves the DNA backbone by beta-delta elimination to generate a single-strand break at the site of the removed base with both 3'- and 5'-phosphates. In Geobacillus kaustophilus (strain HTA426), this protein is Formamidopyrimidine-DNA glycosylase.